Here is an 895-residue protein sequence, read N- to C-terminus: Protein translocase subunit SecA (895 aa).

Residues Q87, 105–109 (GEGKT), and D512 contribute to the ATP site. Basic and acidic residues predominate over residues 833–852 (TQEEVEQAERQRQEMAKRET). The tract at residues 833-895 (TQEEVEQAER…KHCHGSKAKY (63 aa)) is disordered. Residues C877, C879, C888, and H889 each contribute to the Zn(2+) site. Residues 883 to 895 (KKYKHCHGSKAKY) show a composition bias toward basic residues.

Belongs to the SecA family. In terms of assembly, monomer and homodimer. Part of the essential Sec protein translocation apparatus which comprises SecA, SecYEG and auxiliary proteins SecDF-YajC and YidC. The cofactor is Zn(2+).

Its subcellular location is the cell inner membrane. It localises to the cytoplasm. The enzyme catalyses ATP + H2O + cellular proteinSide 1 = ADP + phosphate + cellular proteinSide 2.. Functionally, part of the Sec protein translocase complex. Interacts with the SecYEG preprotein conducting channel. Has a central role in coupling the hydrolysis of ATP to the transfer of proteins into and across the cell membrane, serving both as a receptor for the preprotein-SecB complex and as an ATP-driven molecular motor driving the stepwise translocation of polypeptide chains across the membrane. The polypeptide is Protein translocase subunit SecA (Pasteurella multocida (strain Pm70)).